The sequence spans 456 residues: UDP-N-acetylglucosamine 1-carboxyvinyltransferase (456 aa).

Position 34–35 (34–35) interacts with phosphoenolpyruvate; that stretch reads KN. Position 104 (Arg-104) interacts with UDP-N-acetyl-alpha-D-glucosamine. Cys-128 functions as the Proton donor in the catalytic mechanism. The residue at position 128 (Cys-128) is a 2-(S-cysteinyl)pyruvic acid O-phosphothioketal. The UDP-N-acetyl-alpha-D-glucosamine site is built by Asp-319 and Ile-341.

Belongs to the EPSP synthase family. MurA subfamily.

It localises to the cytoplasm. The enzyme catalyses phosphoenolpyruvate + UDP-N-acetyl-alpha-D-glucosamine = UDP-N-acetyl-3-O-(1-carboxyvinyl)-alpha-D-glucosamine + phosphate. It participates in cell wall biogenesis; peptidoglycan biosynthesis. Its function is as follows. Cell wall formation. Adds enolpyruvyl to UDP-N-acetylglucosamine. The sequence is that of UDP-N-acetylglucosamine 1-carboxyvinyltransferase from Prochlorococcus marinus (strain MIT 9312).